We begin with the raw amino-acid sequence, 494 residues long: GDP-fucose protein O-fucosyltransferase 4 (494 aa).

The Cytoplasmic segment spans residues 1–7 (MAARYTE). The chain crosses the membrane as a helical; Signal-anchor for type II membrane protein span at residues 8–24 (AVLAALGVLSVCSASSS). Residues 25-494 (SGSGASGKAG…EIFMKRNKNL (470 aa)) are Lumenal-facing. Asn167 carries N-linked (GlcNAc...) asparagine glycosylation. Cys390 and Cys393 are oxidised to a cystine.

The protein belongs to the glycosyltransferase 10 family.

The protein resides in the endoplasmic reticulum membrane. It catalyses the reaction L-threonyl-[protein] + GDP-beta-L-fucose = 3-O-(alpha-L-fucosyl)-L-threonyl-[protein] + GDP + H(+). The catalysed reaction is L-seryl-[protein] + GDP-beta-L-fucose = 3-O-(alpha-L-fucosyl)-L-seryl-[protein] + GDP + H(+). It participates in protein modification; protein glycosylation. In terms of biological role, protein O-fucosyltransferase that specifically catalyzes O-fucosylation of serine or threonine residues in EMI domains of target proteins, such as MMRN1, MMRN2 and EMID1. Attaches fucose through an O-glycosidic linkage. O-fucosylation of EMI domain-containing proteins may be required for facilitating protein folding and secretion. Also shows minor alpha-(1,3)-fucosyltransferase activity toward activity toward biantennary N-glycan acceptors. However, this was tested with a library of synthetic substrates and this activity is unsure in vivo. The protein is GDP-fucose protein O-fucosyltransferase 4 (Fut11) of Rattus norvegicus (Rat).